A 201-amino-acid polypeptide reads, in one-letter code: Segregation and condensation protein B (201 aa).

Belongs to the ScpB family. In terms of assembly, homodimer. Homodimerization may be required to stabilize the binding of ScpA to the Smc head domains. Component of a cohesin-like complex composed of ScpA, ScpB and the Smc homodimer, in which ScpA and ScpB bind to the head domain of Smc. The presence of the three proteins is required for the association of the complex with DNA.

It localises to the cytoplasm. Participates in chromosomal partition during cell division. May act via the formation of a condensin-like complex containing Smc and ScpA that pull DNA away from mid-cell into both cell halves. This Enterococcus faecalis (strain ATCC 700802 / V583) protein is Segregation and condensation protein B.